The sequence spans 1065 residues: Isoleucine--tRNA ligase (1065 aa).

Positions 49 to 59 match the 'HIGH' region motif; that stretch reads PYVSGAIHLGT. A 'KMSKS' region motif is present at residues 625–629; sequence KMSKS. Lys-628 contributes to the ATP binding site.

Belongs to the class-I aminoacyl-tRNA synthetase family. IleS type 2 subfamily. Monomer. Zn(2+) serves as cofactor.

Its subcellular location is the cytoplasm. The catalysed reaction is tRNA(Ile) + L-isoleucine + ATP = L-isoleucyl-tRNA(Ile) + AMP + diphosphate. Its function is as follows. Catalyzes the attachment of isoleucine to tRNA(Ile). As IleRS can inadvertently accommodate and process structurally similar amino acids such as valine, to avoid such errors it has two additional distinct tRNA(Ile)-dependent editing activities. One activity is designated as 'pretransfer' editing and involves the hydrolysis of activated Val-AMP. The other activity is designated 'posttransfer' editing and involves deacylation of mischarged Val-tRNA(Ile). This chain is Isoleucine--tRNA ligase, found in Thermococcus kodakarensis (strain ATCC BAA-918 / JCM 12380 / KOD1) (Pyrococcus kodakaraensis (strain KOD1)).